Reading from the N-terminus, the 463-residue chain is Cytoplasmic tRNA 2-thiolation protein 2 (463 aa).

This sequence belongs to the CTU2/NCS2 family.

The protein resides in the cytoplasm. Its pathway is tRNA modification; 5-methoxycarbonylmethyl-2-thiouridine-tRNA biosynthesis. Plays a central role in 2-thiolation of mcm(5)S(2)U at tRNA wobble positions of tRNA(Lys), tRNA(Glu) and tRNA(Gln). May act by forming a heterodimer with NCS6 that ligates sulfur from thiocarboxylated URM1 onto the uridine of tRNAs at wobble position. Prior mcm(5) tRNA modification by the elongator complex is required for 2-thiolation. May also be involved in protein urmylation. This Kluyveromyces lactis (strain ATCC 8585 / CBS 2359 / DSM 70799 / NBRC 1267 / NRRL Y-1140 / WM37) (Yeast) protein is Cytoplasmic tRNA 2-thiolation protein 2.